Reading from the N-terminus, the 332-residue chain is Small ribosomal subunit biogenesis GTPase RsgA (332 aa).

The region spanning 103-259 (RQQLIAANLD…LIDTPGMREL (157 aa)) is the CP-type G domain. GTP-binding positions include 148–151 (TKVD) and 201–209 (GSSGAGKST). Residues Cys281, Cys286, His288, and Cys294 each contribute to the Zn(2+) site.

It belongs to the TRAFAC class YlqF/YawG GTPase family. RsgA subfamily. Monomer. Associates with 30S ribosomal subunit, binds 16S rRNA. The cofactor is Zn(2+).

It is found in the cytoplasm. Functionally, one of several proteins that assist in the late maturation steps of the functional core of the 30S ribosomal subunit. Helps release RbfA from mature subunits. May play a role in the assembly of ribosomal proteins into the subunit. Circularly permuted GTPase that catalyzes slow GTP hydrolysis, GTPase activity is stimulated by the 30S ribosomal subunit. This Xylella fastidiosa (strain M23) protein is Small ribosomal subunit biogenesis GTPase RsgA.